We begin with the raw amino-acid sequence, 490 residues long: Ketol-acid reductoisomerase (NADP(+)) (490 aa).

One can recognise a KARI N-terminal Rossmann domain in the interval 16 to 207 (INKCRFMKKE…GGHRAGVLES (192 aa)). Residues 44–47 (CGAQ), Lys67, Ser77, and 107–109 (DKQ) each bind NADP(+). Residue His131 is part of the active site. Residue Gly157 coordinates NADP(+). KARI C-terminal knotted domains are found at residues 208 to 343 (SFIA…TAPV) and 344 to 483 (YNEK…MKKM). Mg(2+)-binding residues include Asp216, Glu220, Glu388, and Glu392. Ser413 contacts substrate.

The protein belongs to the ketol-acid reductoisomerase family. Requires Mg(2+) as cofactor.

It carries out the reaction (2R)-2,3-dihydroxy-3-methylbutanoate + NADP(+) = (2S)-2-acetolactate + NADPH + H(+). The enzyme catalyses (2R,3R)-2,3-dihydroxy-3-methylpentanoate + NADP(+) = (S)-2-ethyl-2-hydroxy-3-oxobutanoate + NADPH + H(+). It participates in amino-acid biosynthesis; L-isoleucine biosynthesis; L-isoleucine from 2-oxobutanoate: step 2/4. The protein operates within amino-acid biosynthesis; L-valine biosynthesis; L-valine from pyruvate: step 2/4. Functionally, involved in the biosynthesis of branched-chain amino acids (BCAA). Catalyzes an alkyl-migration followed by a ketol-acid reduction of (S)-2-acetolactate (S2AL) to yield (R)-2,3-dihydroxy-isovalerate. In the isomerase reaction, S2AL is rearranged via a Mg-dependent methyl migration to produce 3-hydroxy-3-methyl-2-ketobutyrate (HMKB). In the reductase reaction, this 2-ketoacid undergoes a metal-dependent reduction by NADPH to yield (R)-2,3-dihydroxy-isovalerate. This is Ketol-acid reductoisomerase (NADP(+)) from Buchnera aphidicola subsp. Acyrthosiphon pisum (strain 5A).